The chain runs to 471 residues: Cell division protein FtsP (471 aa).

Positions 1 to 27 (MSLSRRSFLQASGVALAAGALPLKAEA) form a signal peptide, tat-type signal. Residues 229–288 (VRLRLLNASNARRYELSMTDNRAFHVVASDLGFLPAPMTVKRLSLGPGERREVLVDMSQG) enclose the Plastocyanin-like domain.

Belongs to the FtsP family. Post-translationally, predicted to be exported by the Tat system. The position of the signal peptide cleavage has not been experimentally proven.

The protein resides in the periplasm. Cell division protein that is required for growth during stress conditions. May be involved in protecting or stabilizing the divisomal assembly under conditions of stress. In Rahnella sp. (strain Y9602), this protein is Cell division protein FtsP.